The chain runs to 193 residues: Heat shock protein beta-1 (193 aa).

2 positions are modified to phosphoserine: Ser-15 and Ser-80. The sHSP domain maps to 74–182; sequence RALSELSSGI…QSSEITIPVT (109 aa).

Belongs to the small heat shock protein (HSP20) family. As to quaternary structure, homooligomer. Homodimer; becomes monomeric upon activation. Heterooligomer. As to expression, smooth, cardiac and skeletal muscle, hardly detectable in fibroblasts or focal contacts.

The protein localises to the cytoplasm. It localises to the nucleus. Its subcellular location is the cytoskeleton. The protein resides in the spindle. Its function is as follows. Small heat shock protein which functions as a molecular chaperone probably maintaining denatured proteins in a folding-competent state. Plays a role in stress resistance and actin organization. This is Heat shock protein beta-1 (HSPB1) from Gallus gallus (Chicken).